The primary structure comprises 167 residues: Peptide deformylase (167 aa).

2 residues coordinate Fe cation: cysteine 90 and histidine 132. The active site involves glutamate 133. Residue histidine 136 coordinates Fe cation.

This sequence belongs to the polypeptide deformylase family. Fe(2+) serves as cofactor.

The enzyme catalyses N-terminal N-formyl-L-methionyl-[peptide] + H2O = N-terminal L-methionyl-[peptide] + formate. Its function is as follows. Removes the formyl group from the N-terminal Met of newly synthesized proteins. Requires at least a dipeptide for an efficient rate of reaction. N-terminal L-methionine is a prerequisite for activity but the enzyme has broad specificity at other positions. The chain is Peptide deformylase from Dehalococcoides mccartyi (strain CBDB1).